The following is an 89-amino-acid chain: Small ribosomal subunit protein uS15 (89 aa).

The protein belongs to the universal ribosomal protein uS15 family. Part of the 30S ribosomal subunit. Forms a bridge to the 50S subunit in the 70S ribosome, contacting the 23S rRNA.

Functionally, one of the primary rRNA binding proteins, it binds directly to 16S rRNA where it helps nucleate assembly of the platform of the 30S subunit by binding and bridging several RNA helices of the 16S rRNA. In terms of biological role, forms an intersubunit bridge (bridge B4) with the 23S rRNA of the 50S subunit in the ribosome. The protein is Small ribosomal subunit protein uS15 of Ligilactobacillus salivarius (strain UCC118) (Lactobacillus salivarius).